A 121-amino-acid chain; its full sequence is Fluoride-specific ion channel FluC 1 (121 aa).

The next 4 membrane-spanning stretches (helical) occupy residues 3–23 (YLYIFVGGALGALIRFCLSML), 29–49 (IPLGTFVANLLGAFLMGSIGA), 67–87 (TGLLGALTTFSTFQFELVTLF), and 92–112 (FILFTIYGVTSYILGILSCYL). The Na(+) site is built by G71 and T74.

Belongs to the fluoride channel Fluc/FEX (TC 1.A.43) family.

It is found in the cell membrane. It catalyses the reaction fluoride(in) = fluoride(out). Its activity is regulated as follows. Na(+) is not transported, but it plays an essential structural role and its presence is essential for fluoride channel function. Functionally, fluoride-specific ion channel. Important for reducing fluoride concentration in the cell, thus reducing its toxicity. The protein is Fluoride-specific ion channel FluC 1 of Staphylococcus epidermidis (strain ATCC 35984 / DSM 28319 / BCRC 17069 / CCUG 31568 / BM 3577 / RP62A).